The chain runs to 105 residues: Blood plasma apolipoprotein LAL1 (105 aa).

The first 21 residues, 1–21 (MKLHVAALATLAVVCILAAGS), serve as a signal peptide directing secretion. The propeptide occupies 22–29 (EAAPKAMS).

In terms of tissue distribution, plasma.

It is found in the secreted. This is Blood plasma apolipoprotein LAL1 from Petromyzon marinus (Sea lamprey).